The sequence spans 625 residues: 1-deoxy-D-xylulose-5-phosphate synthase (625 aa).

Thiamine diphosphate-binding positions include His-80 and 121–123; that span reads GHS. Asp-152 is a binding site for Mg(2+). Residues 153 to 154, Asn-181, Tyr-290, and Glu-371 contribute to the thiamine diphosphate site; that span reads GA. A Mg(2+)-binding site is contributed by Asn-181.

It belongs to the transketolase family. DXPS subfamily. Homodimer. Mg(2+) serves as cofactor. The cofactor is thiamine diphosphate.

It catalyses the reaction D-glyceraldehyde 3-phosphate + pyruvate + H(+) = 1-deoxy-D-xylulose 5-phosphate + CO2. Its pathway is metabolic intermediate biosynthesis; 1-deoxy-D-xylulose 5-phosphate biosynthesis; 1-deoxy-D-xylulose 5-phosphate from D-glyceraldehyde 3-phosphate and pyruvate: step 1/1. Catalyzes the acyloin condensation reaction between C atoms 2 and 3 of pyruvate and glyceraldehyde 3-phosphate to yield 1-deoxy-D-xylulose-5-phosphate (DXP). The protein is 1-deoxy-D-xylulose-5-phosphate synthase of Haemophilus influenzae (strain ATCC 51907 / DSM 11121 / KW20 / Rd).